Consider the following 106-residue polypeptide: Small ribosomal subunit protein bS16 (106 aa).

It belongs to the bacterial ribosomal protein bS16 family.

The sequence is that of Small ribosomal subunit protein bS16 from Wolbachia pipientis wMel.